A 221-amino-acid chain; its full sequence is Chaperone protein TorD (221 aa).

Belongs to the TorD/DmsD family. TorD subfamily.

It localises to the cytoplasm. Its function is as follows. Involved in the biogenesis of TorA. Acts on TorA before the insertion of the molybdenum cofactor and, as a result, probably favors a conformation of the apoenzyme that is competent for acquiring the cofactor. The polypeptide is Chaperone protein TorD (Shewanella pealeana (strain ATCC 700345 / ANG-SQ1)).